Consider the following 226-residue polypeptide: UPF0177 protein YbdJ (226 aa).

5 helical membrane-spanning segments follow: residues L16 to F36, F43 to A63, L81 to L101, F169 to V189, and L206 to F226.

This sequence belongs to the UPF0177 family.

The protein localises to the cell membrane. The polypeptide is UPF0177 protein YbdJ (ybdJ) (Lactococcus lactis subsp. lactis (strain IL1403) (Streptococcus lactis)).